Consider the following 522-residue polypeptide: Acetylcholine receptor subunit delta (522 aa).

The signal sequence occupies residues 1–21 (MGNIHFVYLLISCLYYSGCSG). Residues 22–245 (VNEEERLIND…VTFYLIIRRK (224 aa)) are Extracellular-facing. N-linked (GlcNAc...) asparagine glycosylation is found at Asn-91, Asn-164, and Asn-229. Cys-151 and Cys-165 are disulfide-bonded. Transmembrane regions (helical) follow at residues 246-270 (PLFYVINFITPCVLISFLASLAFYL), 278-295 (MSTAISVLLAQAVFLLLT), and 312-333 (YLMFIMSLVTGVIVNCGIVLNF). At 334-476 (HFRTPSTHVL…WNLVGQTIDR (143 aa)) the chain is on the cytoplasmic side. Tyr-393 carries the phosphotyrosine; by Tyr-kinases modification. Residues 477 to 497 (LSMFIITPVMVLGTIFIFVMG) traverse the membrane as a helical segment.

The protein belongs to the ligand-gated ion channel (TC 1.A.9) family. Acetylcholine receptor (TC 1.A.9.1) subfamily. As to quaternary structure, pentamer of two alpha chains, and one each of the beta, delta, and gamma chains.

Its subcellular location is the postsynaptic cell membrane. It is found in the cell membrane. The catalysed reaction is K(+)(in) = K(+)(out). It carries out the reaction Na(+)(in) = Na(+)(out). After binding acetylcholine, the AChR responds by an extensive change in conformation that affects all subunits and leads to opening of an ion-conducting channel across the plasma membrane. This Tetronarce californica (Pacific electric ray) protein is Acetylcholine receptor subunit delta (chrnd).